We begin with the raw amino-acid sequence, 835 residues long: Protein translocase subunit SecA (835 aa).

ATP contacts are provided by residues Gln-85, 103–107 (GEGKT), and Asp-492. Zn(2+) contacts are provided by Cys-819, Cys-821, Cys-830, and Cys-831.

Belongs to the SecA family. As to quaternary structure, monomer and homodimer. Part of the essential Sec protein translocation apparatus which comprises SecA, SecYEG and auxiliary proteins SecDF. Other proteins may also be involved. It depends on Zn(2+) as a cofactor.

It localises to the cell membrane. The protein resides in the cytoplasm. The enzyme catalyses ATP + H2O + cellular proteinSide 1 = ADP + phosphate + cellular proteinSide 2.. In terms of biological role, part of the Sec protein translocase complex. Interacts with the SecYEG preprotein conducting channel. Has a central role in coupling the hydrolysis of ATP to the transfer of proteins into and across the cell membrane, serving as an ATP-driven molecular motor driving the stepwise translocation of polypeptide chains across the membrane. This is Protein translocase subunit SecA from Clostridium botulinum (strain Kyoto / Type A2).